Consider the following 326-residue polypeptide: Polycomb complex protein BMI-1 (326 aa).

The RING-type zinc-finger motif lies at Cys18–Asp57. The Nuclear localization signal signature appears at Lys81–Arg95. The interaction with PHC2 stretch occupies residues Arg162–Lys182. An interaction with E4F1 region spans residues Leu164–Arg228. The segment at Ile236 to Gly326 is disordered. A compositionally biased stretch (low complexity) spans Leu265–Pro278. Residues Val279–Asn310 show a composition bias toward polar residues. Positions Ser315 to Gly326 are enriched in low complexity.

Component of a PRC1-like complex.

The protein localises to the nucleus. It is found in the cytoplasm. Component of a Polycomb group (PcG) multiprotein PRC1-like complex, a complex class required to maintain the transcriptionally repressive state of many genes, including Hox genes, throughout development. PcG PRC1 complex acts via chromatin remodeling and modification of histones; it mediates monoubiquitination of histone H2A 'Lys-119', rendering chromatin heritably changed in its expressibility. In the PRC1-like complex, regulates the E3 ubiquitin-protein ligase activity of RNF2/RING2. In Gallus gallus (Chicken), this protein is Polycomb complex protein BMI-1 (BMI1).